The sequence spans 299 residues: ATP phosphoribosyltransferase (299 aa).

The protein belongs to the ATP phosphoribosyltransferase family. Long subfamily. In terms of assembly, equilibrium between an active dimeric form, an inactive hexameric form and higher aggregates. Interconversion between the various forms is largely reversible and is influenced by the natural substrates and inhibitors of the enzyme. Requires Mg(2+) as cofactor.

Its subcellular location is the cytoplasm. The enzyme catalyses 1-(5-phospho-beta-D-ribosyl)-ATP + diphosphate = 5-phospho-alpha-D-ribose 1-diphosphate + ATP. The protein operates within amino-acid biosynthesis; L-histidine biosynthesis; L-histidine from 5-phospho-alpha-D-ribose 1-diphosphate: step 1/9. Its activity is regulated as follows. Feedback inhibited by histidine. Catalyzes the condensation of ATP and 5-phosphoribose 1-diphosphate to form N'-(5'-phosphoribosyl)-ATP (PR-ATP). Has a crucial role in the pathway because the rate of histidine biosynthesis seems to be controlled primarily by regulation of HisG enzymatic activity. In Erwinia tasmaniensis (strain DSM 17950 / CFBP 7177 / CIP 109463 / NCPPB 4357 / Et1/99), this protein is ATP phosphoribosyltransferase.